Reading from the N-terminus, the 288-residue chain is Extracellular ribonuclease (288 aa).

Positions 1–26 are cleaved as a signal peptide; the sequence is MTKKAWFLPLVCVLLISGWLAPAASA.

The protein localises to the secreted. Functionally, mg(2+)-activated ribonuclease which hydrolyzes RNA apparently nonspecifically into oligonucleotides with 5'-terminal phosphate. This chain is Extracellular ribonuclease (bsn), found in Bacillus subtilis (strain 168).